A 511-amino-acid chain; its full sequence is Histidine ammonia-lyase (511 aa).

The segment at residues 143-145 (ASG) is a cross-link (5-imidazolinone (Ala-Gly)). A 2,3-didehydroalanine (Ser) modification is found at S144.

Belongs to the PAL/histidase family. Post-translationally, contains an active site 4-methylidene-imidazol-5-one (MIO), which is formed autocatalytically by cyclization and dehydration of residues Ala-Ser-Gly.

The protein resides in the cytoplasm. It carries out the reaction L-histidine = trans-urocanate + NH4(+). The protein operates within amino-acid degradation; L-histidine degradation into L-glutamate; N-formimidoyl-L-glutamate from L-histidine: step 1/3. In Vibrio parahaemolyticus serotype O3:K6 (strain RIMD 2210633), this protein is Histidine ammonia-lyase.